The sequence spans 239 residues: DNA repair protein RecO (239 aa).

The protein belongs to the RecO family.

Its function is as follows. Involved in DNA repair and RecF pathway recombination. The protein is DNA repair protein RecO of Glaesserella parasuis serovar 5 (strain SH0165) (Haemophilus parasuis).